The primary structure comprises 382 residues: ATP phosphoribosyltransferase regulatory subunit (382 aa).

The protein belongs to the class-II aminoacyl-tRNA synthetase family. HisZ subfamily. Heteromultimer composed of HisG and HisZ subunits.

The protein localises to the cytoplasm. Its pathway is amino-acid biosynthesis; L-histidine biosynthesis; L-histidine from 5-phospho-alpha-D-ribose 1-diphosphate: step 1/9. In terms of biological role, required for the first step of histidine biosynthesis. May allow the feedback regulation of ATP phosphoribosyltransferase activity by histidine. This is ATP phosphoribosyltransferase regulatory subunit from Burkholderia vietnamiensis (strain G4 / LMG 22486) (Burkholderia cepacia (strain R1808)).